A 498-amino-acid chain; its full sequence is Angiopoietin-4 (498 aa).

The first 22 residues, 1-22 (MPSPPAMLLGGLLLIVASTTVA), serve as a signal peptide directing secretion. The interval 51 to 80 (EPEPCPPEPEAFGGSNSLQRDSPAATLNLG) is disordered. A coiled-coil region spans residues 85–109 (QRMRQLEKMLENNTQWLQKLERYIQ). 8 N-linked (GlcNAc...) asparagine glycosylation sites follow: Asn-96, Asn-126, Asn-158, Asn-247, Asn-295, Asn-306, Asn-332, and Asn-424. Positions 186 to 254 (HELHRLQGHN…SSNSSLLQRQ (69 aa)) form a coiled coil. Residues 277–497 (RAADQLFQDC…TTRMMVRPSG (221 aa)) enclose the Fibrinogen C-terminal domain. Cys-286 and Cys-315 form a disulfide bridge. Cys-439 and Cys-452 form a disulfide bridge.

In terms of assembly, homodimer; disulfide-linked. Interacts with TEK/TIE2.

It localises to the secreted. Binds to TEK/TIE2, modulating ANGPT1 signaling. Can induce tyrosine phosphorylation of TEK/TIE2. Promotes endothelial cell survival, migration and angiogenesis. The chain is Angiopoietin-4 (ANGPT4) from Bos taurus (Bovine).